The primary structure comprises 532 residues: Probable NAD kinase 1 (532 aa).

A compositionally biased stretch (basic and acidic residues) spans 1 to 26 (MSLDELPHKVSDERVNHDTVTSHESE). Residues 1 to 32 (MSLDELPHKVSDERVNHDTVTSHESEIGSGSI) form a disordered region.

This sequence belongs to the NAD kinase family.

The enzyme catalyses NAD(+) + ATP = ADP + NADP(+) + H(+). The protein is Probable NAD kinase 1 of Oryza sativa subsp. japonica (Rice).